A 549-amino-acid chain; its full sequence is Glucose-6-phosphate isomerase (549 aa).

The active-site Proton donor is the Glu355. Residues His386 and Lys514 contribute to the active site.

The protein belongs to the GPI family.

The protein resides in the cytoplasm. It catalyses the reaction alpha-D-glucose 6-phosphate = beta-D-fructose 6-phosphate. The protein operates within carbohydrate biosynthesis; gluconeogenesis. Its pathway is carbohydrate degradation; glycolysis; D-glyceraldehyde 3-phosphate and glycerone phosphate from D-glucose: step 2/4. In terms of biological role, catalyzes the reversible isomerization of glucose-6-phosphate to fructose-6-phosphate. The sequence is that of Glucose-6-phosphate isomerase from Buchnera aphidicola subsp. Acyrthosiphon pisum (strain 5A).